Consider the following 107-residue polypeptide: Putative double-stranded DNA mimic protein YpsIP31758_1954 (107 aa).

This sequence belongs to the putative dsDNA mimic protein family.

In terms of biological role, may act as a double-stranded DNA (dsDNA) mimic. Probably regulates the activity of a dsDNA-binding protein. The chain is Putative double-stranded DNA mimic protein YpsIP31758_1954 from Yersinia pseudotuberculosis serotype O:1b (strain IP 31758).